A 634-amino-acid polypeptide reads, in one-letter code: Knob-associated histidine-rich protein (634 aa).

The signal sequence occupies residues 1–34 (MKSFKNKNTLRRKKAFPVFTKILLVSFLVWVLKC). N-linked (GlcNAc...) asparagine glycosylation occurs at asparagine 42. Residues 57–87 (AQKQHEHHHHHHHQHQHQHQAPHQAHHHHHH) are compositionally biased toward basic residues. Disordered stretches follow at residues 57-143 (AQKQ…QVFR) and 347-634 (SSVN…GCCG). Over residues 95–104 (PQVHQQVHGQ) the composition is skewed to low complexity. Positions 108 to 117 (HHHHHHHHHQ) are enriched in basic residues. Basic and acidic residues-rich tracts occupy residues 354–375 (KHGD…EGEK) and 396–405 (KDNEDAESVK). The span at 406–422 (SKKHKSHDCEKKKSKKH) shows a compositional bias: basic residues. Composition is skewed to basic and acidic residues over residues 423–444 (KDNE…GEKH) and 453–493 (KTNE…KKVD). The span at 494–505 (STSADNKSTNAA) shows a compositional bias: polar residues. Positions 509-520 (AKDKTQGGKTDK) are enriched in basic and acidic residues. 4 tandem repeats follow at residues 540–549 (TKGATKEAST), 550–559 (SKEATKEAST), 560–569 (SKGATKEAST), and 570–579 (TEGATKGAST). The 4 X 10 AA tandem repeats of [TS]-[KE]-[GE]-A-T-K-[EG]-A-S-T stretch occupies residues 540 to 580 (TKGATKEASTSKEATKEASTSKGATKEASTTEGATKGASTT). The segment covering 567–591 (ASTTEGATKGASTTAGSTTGATTGA) has biased composition (low complexity). Residues 605-620 (AANNGEQVMSRGQAQL) show a composition bias toward polar residues. Basic residues predominate over residues 625 to 634 (KKKKKRGCCG).

It is found in the secreted. Functionally, KAHRP might mimick human histidine-rich glycoproteins to anchor host thrombospondin or a parasite analog in a binding complex with the endothelial cell receptor. The polypeptide is Knob-associated histidine-rich protein (Plasmodium falciparum (isolate FCR-3 / Gambia)).